Consider the following 400-residue polypeptide: Enoyl-[acyl-carrier-protein] reductase [NADH] 1 (400 aa).

NAD(+) contacts are provided by residues 48 to 53 (GASSGY), 74 to 75 (FE), 111 to 112 (DA), and 139 to 140 (LA). Tyr225 is a binding site for substrate. Residue Tyr235 is the Proton donor of the active site. NAD(+)-binding positions include Lys244 and 273–275 (VVT).

Belongs to the TER reductase family. Monomer.

It carries out the reaction a 2,3-saturated acyl-[ACP] + NAD(+) = a (2E)-enoyl-[ACP] + NADH + H(+). Its pathway is lipid metabolism; fatty acid biosynthesis. In terms of biological role, involved in the final reduction of the elongation cycle of fatty acid synthesis (FAS II). Catalyzes the reduction of a carbon-carbon double bond in an enoyl moiety that is covalently linked to an acyl carrier protein (ACP). This Vibrio vulnificus (strain CMCP6) protein is Enoyl-[acyl-carrier-protein] reductase [NADH] 1.